Here is a 513-residue protein sequence, read N- to C-terminus: Trigger factor (513 aa).

Positions 164–249 (GDQIIIDFLG…VKAVKNAGEF (86 aa)) constitute a PPIase FKBP-type domain. The tract at residues 436-513 (QAAIEAEEGA…KAPAKKKAEG (78 aa)) is disordered. The span at 452–461 (AKKAPAKKKA) shows a compositional bias: basic residues. Positions 489–498 (ADEAPAAEEA) are enriched in low complexity. Residues 501-513 (AKKKAPAKKKAEG) show a composition bias toward basic residues.

This sequence belongs to the FKBP-type PPIase family. Tig subfamily.

Its subcellular location is the cytoplasm. The catalysed reaction is [protein]-peptidylproline (omega=180) = [protein]-peptidylproline (omega=0). Involved in protein export. Acts as a chaperone by maintaining the newly synthesized protein in an open conformation. Functions as a peptidyl-prolyl cis-trans isomerase. The protein is Trigger factor of Novosphingobium aromaticivorans (strain ATCC 700278 / DSM 12444 / CCUG 56034 / CIP 105152 / NBRC 16084 / F199).